The primary structure comprises 84 residues: U4-theraphotoxin-Hhn1a (84 aa).

The first 22 residues, 1–22 (MKVTLIAILTRAAVLVLHTTAA), serve as a signal peptide directing secretion. A propeptide spanning residues 23–47 (EELEESQLMEVSMPDTELAAVDEER) is cleaved from the precursor. Disulfide bonds link Cys51/Cys65, Cys55/Cys76, and Cys70/Cys81.

It belongs to the neurotoxin 12 (Hwtx-2) family. 02 (Hwtx-2) subfamily. Expressed by the venom gland.

It localises to the secreted. Its function is as follows. Postsynaptic neurotoxin. The sequence is that of U4-theraphotoxin-Hhn1a from Cyriopagopus hainanus (Chinese bird spider).